The sequence spans 213 residues: Thymidylate kinase (213 aa).

10-17 (GLEGAGKT) contributes to the ATP binding site.

The protein belongs to the thymidylate kinase family.

It carries out the reaction dTMP + ATP = dTDP + ADP. Phosphorylation of dTMP to form dTDP in both de novo and salvage pathways of dTTP synthesis. This Salmonella dublin (strain CT_02021853) protein is Thymidylate kinase.